Consider the following 403-residue polypeptide: RNA-binding motif, single-stranded-interacting protein 1 (403 aa).

Positions 30 to 56 are disordered; that stretch reads PAHPMAPPSPSTTSSNNNSSSSSNSGW. The segment covering 40–54 has biased composition (low complexity); sequence STTSSNNNSSSSSNS. RRM domains are found at residues 62–135 and 141–226; these read TNLY…MAKQ and TNLY…FADG. Thr-208 bears the Phosphothreonine mark. The span at 382-395 shows a compositional bias: polar residues; it reads GQQQVAVETSNDHS. The disordered stretch occupies residues 382-403; it reads GQQQVAVETSNDHSPYTFPPNK.

Ubiquitous. Expressed in all tissues except testis.

Its subcellular location is the nucleus. Its function is as follows. Single-stranded DNA binding protein that interacts with the region upstream of the MYC gene. Binds specifically to the DNA sequence motif 5'-[AT]CT[AT][AT]T-3'. Probably has a role in DNA replication. In Mus musculus (Mouse), this protein is RNA-binding motif, single-stranded-interacting protein 1 (Rbms1).